Reading from the N-terminus, the 98-residue chain is Aspartyl/glutamyl-tRNA(Asn/Gln) amidotransferase subunit C (98 aa).

The interval 77–98 (NEAPNPEGDFFRVPQILNTDEE) is disordered.

Belongs to the GatC family. Heterotrimer of A, B and C subunits.

The catalysed reaction is L-glutamyl-tRNA(Gln) + L-glutamine + ATP + H2O = L-glutaminyl-tRNA(Gln) + L-glutamate + ADP + phosphate + H(+). It catalyses the reaction L-aspartyl-tRNA(Asn) + L-glutamine + ATP + H2O = L-asparaginyl-tRNA(Asn) + L-glutamate + ADP + phosphate + 2 H(+). In terms of biological role, allows the formation of correctly charged Asn-tRNA(Asn) or Gln-tRNA(Gln) through the transamidation of misacylated Asp-tRNA(Asn) or Glu-tRNA(Gln) in organisms which lack either or both of asparaginyl-tRNA or glutaminyl-tRNA synthetases. The reaction takes place in the presence of glutamine and ATP through an activated phospho-Asp-tRNA(Asn) or phospho-Glu-tRNA(Gln). The polypeptide is Aspartyl/glutamyl-tRNA(Asn/Gln) amidotransferase subunit C (Crocosphaera subtropica (strain ATCC 51142 / BH68) (Cyanothece sp. (strain ATCC 51142))).